The primary structure comprises 700 residues: Transketolase (700 aa).

At T2 the chain carries N-acetylthreonine. Residue H45 coordinates substrate. Residues T48, H85, 133–135 (GPL), and L135 contribute to the thiamine diphosphate site. Residue D177 coordinates Mg(2+). Positions 178 and 207 each coordinate thiamine diphosphate. Residues N207 and I209 each coordinate Mg(2+). The substrate site is built by H283, R378, and S405. H283 provides a ligand contact to thiamine diphosphate. The Proton donor role is filled by E441. F467 lines the thiamine diphosphate pocket. Substrate-binding residues include H491, D499, and R552.

This sequence belongs to the transketolase family. In terms of assembly, homodimer. Mg(2+) serves as cofactor. Ca(2+) is required as a cofactor. Requires Mn(2+) as cofactor. It depends on Co(2+) as a cofactor. The cofactor is thiamine diphosphate.

The catalysed reaction is D-sedoheptulose 7-phosphate + D-glyceraldehyde 3-phosphate = aldehydo-D-ribose 5-phosphate + D-xylulose 5-phosphate. Its function is as follows. Catalyzes the reversible transfer of a two-carbon ketol group from sedoheptulose-7-phosphate to glyceraldehyde-3-phosphate, producing xylulose-5-phosphate and ribose-5-phosphate. Catalyzes the transfer of a two-carbon ketol group from a ketose donor to an aldose acceptor, via a covalent intermediate with the cofactor thiamine pyrophosphate. This chain is Transketolase (tkt), found in Mycobacterium tuberculosis (strain ATCC 25618 / H37Rv).